Reading from the N-terminus, the 101-residue chain is uncharacterized protein (101 aa).

Residues V70 to V90 traverse the membrane as a helical segment.

Its subcellular location is the membrane. This is an uncharacterized protein from Saccharomyces cerevisiae (strain ATCC 204508 / S288c) (Baker's yeast).